A 273-amino-acid chain; its full sequence is Putative phosphoenolpyruvate synthase regulatory protein (273 aa).

An ADP-binding site is contributed by 153-160 (GVSRCGKT).

This sequence belongs to the pyruvate, phosphate/water dikinase regulatory protein family. PSRP subfamily.

It catalyses the reaction [pyruvate, water dikinase] + ADP = [pyruvate, water dikinase]-phosphate + AMP + H(+). The catalysed reaction is [pyruvate, water dikinase]-phosphate + phosphate + H(+) = [pyruvate, water dikinase] + diphosphate. Bifunctional serine/threonine kinase and phosphorylase involved in the regulation of the phosphoenolpyruvate synthase (PEPS) by catalyzing its phosphorylation/dephosphorylation. This Sodalis glossinidius (strain morsitans) protein is Putative phosphoenolpyruvate synthase regulatory protein.